Consider the following 193-residue polypeptide: Thymidine kinase (193 aa).

ATP is bound by residues 16–23 (GPMFSGKS) and 89–92 (DEIQ). Glu90 (proton acceptor) is an active-site residue. Residues Cys146, Cys149, Cys184, and Cys187 each coordinate Zn(2+).

This sequence belongs to the thymidine kinase family. In terms of assembly, homotetramer.

It is found in the cytoplasm. It catalyses the reaction thymidine + ATP = dTMP + ADP + H(+). The chain is Thymidine kinase from Thermoanaerobacter pseudethanolicus (strain ATCC 33223 / 39E) (Clostridium thermohydrosulfuricum).